The chain runs to 113 residues: Large ribosomal subunit protein uL22 (113 aa).

It belongs to the universal ribosomal protein uL22 family. As to quaternary structure, part of the 50S ribosomal subunit.

Its function is as follows. This protein binds specifically to 23S rRNA; its binding is stimulated by other ribosomal proteins, e.g. L4, L17, and L20. It is important during the early stages of 50S assembly. It makes multiple contacts with different domains of the 23S rRNA in the assembled 50S subunit and ribosome. Functionally, the globular domain of the protein is located near the polypeptide exit tunnel on the outside of the subunit, while an extended beta-hairpin is found that lines the wall of the exit tunnel in the center of the 70S ribosome. This chain is Large ribosomal subunit protein uL22, found in Herpetosiphon aurantiacus (strain ATCC 23779 / DSM 785 / 114-95).